Here is a 382-residue protein sequence, read N- to C-terminus: tRNA (guanine(26)-N(2))-dimethyltransferase (382 aa).

The Trm1 methyltransferase domain occupies 4–373; the sequence is VEIIEGKARI…KNLDEIKECI (370 aa). S-adenosyl-L-methionine contacts are provided by Arg-44, Arg-69, and Asp-87. Positions 246, 249, 263, and 266 each coordinate Zn(2+).

The protein belongs to the class I-like SAM-binding methyltransferase superfamily. Trm1 family.

It catalyses the reaction guanosine(26) in tRNA + 2 S-adenosyl-L-methionine = N(2)-dimethylguanosine(26) in tRNA + 2 S-adenosyl-L-homocysteine + 2 H(+). Its function is as follows. Dimethylates a single guanine residue at position 26 of a number of tRNAs using S-adenosyl-L-methionine as donor of the methyl groups. The polypeptide is tRNA (guanine(26)-N(2))-dimethyltransferase (Sulfolobus acidocaldarius (strain ATCC 33909 / DSM 639 / JCM 8929 / NBRC 15157 / NCIMB 11770)).